The chain runs to 396 residues: 1-deoxy-D-xylulose 5-phosphate reductoisomerase (396 aa).

5 residues coordinate NADPH: threonine 10, glycine 11, serine 12, isoleucine 13, and asparagine 123. 1-deoxy-D-xylulose 5-phosphate is bound at residue lysine 124. Glutamate 125 is an NADPH binding site. Position 149 (aspartate 149) interacts with Mn(2+). Serine 150, glutamate 151, serine 185, and histidine 208 together coordinate 1-deoxy-D-xylulose 5-phosphate. Glutamate 151 contacts Mn(2+). Glycine 214 provides a ligand contact to NADPH. Residues serine 221, asparagine 226, lysine 227, and glutamate 230 each coordinate 1-deoxy-D-xylulose 5-phosphate. Position 230 (glutamate 230) interacts with Mn(2+).

This sequence belongs to the DXR family. The cofactor is Mg(2+). Requires Mn(2+) as cofactor.

The enzyme catalyses 2-C-methyl-D-erythritol 4-phosphate + NADP(+) = 1-deoxy-D-xylulose 5-phosphate + NADPH + H(+). It functions in the pathway isoprenoid biosynthesis; isopentenyl diphosphate biosynthesis via DXP pathway; isopentenyl diphosphate from 1-deoxy-D-xylulose 5-phosphate: step 1/6. Its function is as follows. Catalyzes the NADPH-dependent rearrangement and reduction of 1-deoxy-D-xylulose-5-phosphate (DXP) to 2-C-methyl-D-erythritol 4-phosphate (MEP). This is 1-deoxy-D-xylulose 5-phosphate reductoisomerase from Shewanella sp. (strain MR-4).